The primary structure comprises 409 residues: Pentatricopeptide repeat-containing protein At1g31790 (409 aa).

9 PPR repeats span residues 87–121, 122–152, 153–187, 192–226, 229–259, 260–294, 295–330, 331–361, and 363–397; these read NEDI…SIRP, TITF…MPHR, DFHS…SQKG, PSWI…GFID, DSYL…LSNA, NTVA…GIKK, NVSV…GFES, DCLI…SKDE, and SVSC…GIKA.

It belongs to the PPR family. PCMP-A subfamily.

This Arabidopsis thaliana (Mouse-ear cress) protein is Pentatricopeptide repeat-containing protein At1g31790 (PCMP-A1).